A 486-amino-acid chain; its full sequence is Cysteine--tRNA ligase (486 aa).

Cys30 contacts Zn(2+). A 'HIGH' region motif is present at residues 32 to 42; it reads PTVYDRAHLGN. Zn(2+) is bound by residues Cys221, His246, and Glu250. The short motif at 279–283 is the 'KMSKS' region element; it reads KMSKS. Lys282 contacts ATP.

It belongs to the class-I aminoacyl-tRNA synthetase family. In terms of assembly, monomer. The cofactor is Zn(2+).

The protein localises to the cytoplasm. The enzyme catalyses tRNA(Cys) + L-cysteine + ATP = L-cysteinyl-tRNA(Cys) + AMP + diphosphate. The chain is Cysteine--tRNA ligase from Cereibacter sphaeroides (strain ATCC 17025 / ATH 2.4.3) (Rhodobacter sphaeroides).